The chain runs to 730 residues: Hemolytic phospholipase C (730 aa).

A signal peptide (tat-type signal) is located at residues 1–38 (MTENWKFRRRTFLKHGAQAATLAGLSGLFPETLRRALA).

This sequence belongs to the bacterial phospholipase C family. Post-translationally, predicted to be exported by the Tat system. The position of the signal peptide cleavage has not been experimentally proven.

The enzyme catalyses a 1,2-diacyl-sn-glycero-3-phosphocholine + H2O = phosphocholine + a 1,2-diacyl-sn-glycerol + H(+). In terms of biological role, hydrolyzes sphingomyelin in addition to phosphatidylcholine. This Pseudomonas aeruginosa (strain ATCC 15692 / DSM 22644 / CIP 104116 / JCM 14847 / LMG 12228 / 1C / PRS 101 / PAO1) protein is Hemolytic phospholipase C (plcH).